Here is a 312-residue protein sequence, read N- to C-terminus: Testis-expressed protein 13B (312 aa).

This sequence belongs to the TEX13 family. As to expression, testis specific.

This Homo sapiens (Human) protein is Testis-expressed protein 13B (TEX13B).